A 262-amino-acid chain; its full sequence is Dihydroorotate dehydrogenase B (NAD(+)), electron transfer subunit (262 aa).

In terms of domain architecture, FAD-binding FR-type spans 3–104; that stretch reads QLQEMMTVVS…MGPLGNGFPV (102 aa). Residues 53 to 56, 70 to 72, and 79 to 80 contribute to the FAD site; these read RPIS, LYR, and GT. [2Fe-2S] cluster-binding residues include C226, C231, C234, and C249.

It belongs to the PyrK family. As to quaternary structure, heterotetramer of 2 PyrK and 2 PyrD type B subunits. [2Fe-2S] cluster serves as cofactor. It depends on FAD as a cofactor.

It participates in pyrimidine metabolism; UMP biosynthesis via de novo pathway; orotate from (S)-dihydroorotate (NAD(+) route): step 1/1. Its function is as follows. Responsible for channeling the electrons from the oxidation of dihydroorotate from the FMN redox center in the PyrD type B subunit to the ultimate electron acceptor NAD(+). The chain is Dihydroorotate dehydrogenase B (NAD(+)), electron transfer subunit from Lactococcus lactis subsp. cremoris (strain SK11).